A 113-amino-acid polypeptide reads, in one-letter code: Nascent polypeptide-associated complex protein (113 aa).

The region spanning 5–73 is the NAC-A/B domain; that stretch reads GMNPAKMKQM…AKEVPKSLEI (69 aa).

This sequence belongs to the NAC-alpha family. Homodimer. Interacts with the ribosome. Binds ribosomal RNA.

Contacts the emerging nascent chain on the ribosome. The chain is Nascent polypeptide-associated complex protein from Methanosarcina acetivorans (strain ATCC 35395 / DSM 2834 / JCM 12185 / C2A).